We begin with the raw amino-acid sequence, 481 residues long: MNILRRGRLGSNVKEDVMKFTTSLEFDKEIFESDILCDIAHTTMLVEQNVISEENGKKIIAELKKIAEQSMESLNLDPSLDDIHMVIESELIKELGEDVAGRMHTGRSRNDEVATDLRLSLRKKVLEIITHLIAMEKNMLRVSREHKETLTVGYTHLQQAQPVTFGHHILSHVSAIERDISRFFDTYNRINISPLGCGAMATTGFNLNRKRTQELLGFYDLIENSMDGVSSRDFVVETMANISMLGTNLSKICEELVVFSSAEFNTIEIANEYTSTSSIMPQKKNPDVAEITRAKLSTLNGELVTVLTIMKALPNTYNRDLQEISPHLWKSVYTLIDSIQMVDGMISTVKVNKERMKENAEKNYSTATELADTLVRECGIAFRMAHGIVGELVKRSIEEKVEIKEIILEVLEKNNLSLSQEKIDTALDPFENVKLRNVIGGPAPKEVERAISSFNEKISSHKEKLDEKIAEIESVKKNLLK.

The protein belongs to the lyase 1 family. Argininosuccinate lyase subfamily.

The protein resides in the cytoplasm. It carries out the reaction 2-(N(omega)-L-arginino)succinate = fumarate + L-arginine. The protein operates within amino-acid biosynthesis; L-arginine biosynthesis; L-arginine from L-ornithine and carbamoyl phosphate: step 3/3. This chain is Argininosuccinate lyase, found in Methanococcus maripaludis (strain C6 / ATCC BAA-1332).